Consider the following 95-residue polypeptide: Glutamyl-tRNA(Gln) amidotransferase subunit C 1 (95 aa).

Belongs to the GatC family. As to quaternary structure, heterotrimer of A, B and C subunits.

The catalysed reaction is L-glutamyl-tRNA(Gln) + L-glutamine + ATP + H2O = L-glutaminyl-tRNA(Gln) + L-glutamate + ADP + phosphate + H(+). The enzyme catalyses L-aspartyl-tRNA(Asn) + L-glutamine + ATP + H2O = L-asparaginyl-tRNA(Asn) + L-glutamate + ADP + phosphate + 2 H(+). Allows the formation of correctly charged Asn-tRNA(Asn) or Gln-tRNA(Gln) through the transamidation of misacylated Asp-tRNA(Asn) or Glu-tRNA(Gln) in organisms which lack either or both of asparaginyl-tRNA or glutaminyl-tRNA synthetases. The reaction takes place in the presence of glutamine and ATP through an activated phospho-Asp-tRNA(Asn) or phospho-Glu-tRNA(Gln). This chain is Glutamyl-tRNA(Gln) amidotransferase subunit C 1 (gatC1), found in Clostridium acetobutylicum (strain ATCC 824 / DSM 792 / JCM 1419 / IAM 19013 / LMG 5710 / NBRC 13948 / NRRL B-527 / VKM B-1787 / 2291 / W).